The chain runs to 111 residues: Large ribosomal subunit protein uL22 (111 aa).

The protein belongs to the universal ribosomal protein uL22 family. Part of the 50S ribosomal subunit.

This protein binds specifically to 23S rRNA; its binding is stimulated by other ribosomal proteins, e.g. L4, L17, and L20. It is important during the early stages of 50S assembly. It makes multiple contacts with different domains of the 23S rRNA in the assembled 50S subunit and ribosome. Its function is as follows. The globular domain of the protein is located near the polypeptide exit tunnel on the outside of the subunit, while an extended beta-hairpin is found that lines the wall of the exit tunnel in the center of the 70S ribosome. The protein is Large ribosomal subunit protein uL22 of Acholeplasma laidlawii.